The primary structure comprises 874 residues: Alanine--tRNA ligase (874 aa).

Residues H562, H566, C665, and H669 each contribute to the Zn(2+) site.

It belongs to the class-II aminoacyl-tRNA synthetase family. It depends on Zn(2+) as a cofactor.

It localises to the cytoplasm. It carries out the reaction tRNA(Ala) + L-alanine + ATP = L-alanyl-tRNA(Ala) + AMP + diphosphate. In terms of biological role, catalyzes the attachment of alanine to tRNA(Ala) in a two-step reaction: alanine is first activated by ATP to form Ala-AMP and then transferred to the acceptor end of tRNA(Ala). Also edits incorrectly charged Ser-tRNA(Ala) and Gly-tRNA(Ala) via its editing domain. The protein is Alanine--tRNA ligase of Stutzerimonas stutzeri (strain A1501) (Pseudomonas stutzeri).